A 500-amino-acid chain; its full sequence is Glutamate--tRNA ligase (500 aa).

The short motif at 12 to 22 (PSPTGHLHIGN) is the 'HIGH' region element. A 'KMSKS' region motif is present at residues 259-263 (KLSKR). Residue K262 coordinates ATP.

It belongs to the class-I aminoacyl-tRNA synthetase family. Glutamate--tRNA ligase type 1 subfamily. As to quaternary structure, monomer.

The protein resides in the cytoplasm. It catalyses the reaction tRNA(Glu) + L-glutamate + ATP = L-glutamyl-tRNA(Glu) + AMP + diphosphate. Catalyzes the attachment of glutamate to tRNA(Glu) in a two-step reaction: glutamate is first activated by ATP to form Glu-AMP and then transferred to the acceptor end of tRNA(Glu). The sequence is that of Glutamate--tRNA ligase from Lactobacillus delbrueckii subsp. bulgaricus (strain ATCC BAA-365 / Lb-18).